We begin with the raw amino-acid sequence, 315 residues long: DNA-directed RNA polymerase subunit alpha (315 aa).

Residues 1-228 form an alpha N-terminal domain (alpha-NTD) region; sequence MLEIEKPKIE…EHFKLFMTLT (228 aa). The alpha C-terminal domain (alpha-CTD) stretch occupies residues 245–315; it reads KEKVLEMTIE…LGLSLKLNDE (71 aa).

The protein belongs to the RNA polymerase alpha chain family. Homodimer. The RNAP catalytic core consists of 2 alpha, 1 beta, 1 beta' and 1 omega subunit. When a sigma factor is associated with the core the holoenzyme is formed, which can initiate transcription.

The enzyme catalyses RNA(n) + a ribonucleoside 5'-triphosphate = RNA(n+1) + diphosphate. DNA-dependent RNA polymerase catalyzes the transcription of DNA into RNA using the four ribonucleoside triphosphates as substrates. In Clostridium acetobutylicum (strain ATCC 824 / DSM 792 / JCM 1419 / IAM 19013 / LMG 5710 / NBRC 13948 / NRRL B-527 / VKM B-1787 / 2291 / W), this protein is DNA-directed RNA polymerase subunit alpha.